The following is a 217-amino-acid chain: Uracil-DNA glycosylase (217 aa).

The active-site Proton acceptor is the D62.

This sequence belongs to the uracil-DNA glycosylase (UDG) superfamily. UNG family.

Its subcellular location is the cytoplasm. It carries out the reaction Hydrolyzes single-stranded DNA or mismatched double-stranded DNA and polynucleotides, releasing free uracil.. Its function is as follows. Excises uracil residues from the DNA which can arise as a result of misincorporation of dUMP residues by DNA polymerase or due to deamination of cytosine. The polypeptide is Uracil-DNA glycosylase (Streptococcus mutans serotype c (strain ATCC 700610 / UA159)).